Reading from the N-terminus, the 235-residue chain is Hydroxyacylglutathione hydrolase (235 aa).

His-53, His-55, Asp-57, His-58, His-109, Asp-127, and His-165 together coordinate Zn(2+).

It belongs to the metallo-beta-lactamase superfamily. Glyoxalase II family. In terms of assembly, monomer. Requires Zn(2+) as cofactor.

It carries out the reaction an S-(2-hydroxyacyl)glutathione + H2O = a 2-hydroxy carboxylate + glutathione + H(+). Its pathway is secondary metabolite metabolism; methylglyoxal degradation; (R)-lactate from methylglyoxal: step 2/2. Functionally, thiolesterase that catalyzes the hydrolysis of S-D-lactoyl-glutathione to form glutathione and D-lactic acid. This chain is Hydroxyacylglutathione hydrolase, found in Glaesserella parasuis serovar 5 (strain SH0165) (Haemophilus parasuis).